Reading from the N-terminus, the 479-residue chain is Ribosomal RNA small subunit methyltransferase F (479 aa).

Residues 125–131, Glu-149, Asp-176, and Asp-194 contribute to the S-adenosyl-L-methionine site; that span reads AAAPGSK. Cys-247 functions as the Nucleophile in the catalytic mechanism.

It belongs to the class I-like SAM-binding methyltransferase superfamily. RsmB/NOP family.

It is found in the cytoplasm. The catalysed reaction is cytidine(1407) in 16S rRNA + S-adenosyl-L-methionine = 5-methylcytidine(1407) in 16S rRNA + S-adenosyl-L-homocysteine + H(+). Its function is as follows. Specifically methylates the cytosine at position 1407 (m5C1407) of 16S rRNA. This chain is Ribosomal RNA small subunit methyltransferase F, found in Shigella boydii serotype 18 (strain CDC 3083-94 / BS512).